Here is a 498-residue protein sequence, read N- to C-terminus: Phosphonates import ATP-binding protein PhnC (498 aa).

The disordered stretch occupies residues 1–27 (MPQRPEAARAGPVAGPDAASKPAPGPA). The 242-residue stretch at 28–269 (LTLRGAGRAY…DLGELYEARR (242 aa)) folds into the ABC transporter domain. 60-67 (GPSGAGKS) lines the ATP pocket. The lysR substrate binding domain stretch occupies residues 270–498 (GAADPARAPA…LEVARAEVPP (229 aa)).

Belongs to the ABC transporter superfamily. Phosphonates importer (TC 3.A.1.9.1) family. As to quaternary structure, the complex is composed of two ATP-binding proteins (PhnC), two transmembrane proteins (PhnE) and a solute-binding protein (PhnD).

It localises to the cell inner membrane. The enzyme catalyses phosphonate(out) + ATP + H2O = phosphonate(in) + ADP + phosphate + H(+). Functionally, part of the ABC transporter complex PhnCDE involved in phosphonates import. Responsible for energy coupling to the transport system. This chain is Phosphonates import ATP-binding protein PhnC, found in Anaeromyxobacter dehalogenans (strain 2CP-C).